The sequence spans 42 residues: DRDSCIDKSRCSKYGYYQECQDCCKKAGHNRGTCMFFKCKCA.

Cystine bridges form between Cys-5–Cys-23, Cys-11–Cys-34, Cys-20–Cys-39, and Cys-24–Cys-41.

The protein belongs to the ergtoxin family. Gamma-KTx 1 subfamily. Expressed by the venom gland.

The protein resides in the secreted. Blocks human voltage-gated potassium channel Kv11.1/KCNH2/ERG1 (IC(50)=16.9 nM). This chain is Potassium channel gamma toxin gamma-KTx 1.9, found in Centruroides tecomanus (Scorpion).